The primary structure comprises 159 residues: Late embryogenesis abundant protein 50 (159 aa).

SMP domains follow at residues 30–87 (TTLT…RNQK) and 96–151 (NLGD…YKLN).

It belongs to the LEA type SMP family.

The protein localises to the cytoplasm. It localises to the nucleus. Functionally, LEA proteins are late embryonic proteins abundant in higher plant seed embryos. The function of those proteins is not known. The sequence is that of Late embryogenesis abundant protein 50 from Arabidopsis thaliana (Mouse-ear cress).